Here is a 274-residue protein sequence, read N- to C-terminus: Diaminopimelate epimerase (274 aa).

Residues asparagine 11, glutamine 44, and asparagine 64 each coordinate substrate. Cysteine 73 serves as the catalytic Proton donor. Residues 74-75 (GN), asparagine 157, asparagine 190, and 208-209 (ER) each bind substrate. Catalysis depends on cysteine 217, which acts as the Proton acceptor. Residue 218 to 219 (GS) participates in substrate binding.

It belongs to the diaminopimelate epimerase family. In terms of assembly, homodimer.

It is found in the cytoplasm. It carries out the reaction (2S,6S)-2,6-diaminopimelate = meso-2,6-diaminopimelate. The protein operates within amino-acid biosynthesis; L-lysine biosynthesis via DAP pathway; DL-2,6-diaminopimelate from LL-2,6-diaminopimelate: step 1/1. Its function is as follows. Catalyzes the stereoinversion of LL-2,6-diaminopimelate (L,L-DAP) to meso-diaminopimelate (meso-DAP), a precursor of L-lysine and an essential component of the bacterial peptidoglycan. The sequence is that of Diaminopimelate epimerase from Erwinia tasmaniensis (strain DSM 17950 / CFBP 7177 / CIP 109463 / NCPPB 4357 / Et1/99).